A 504-amino-acid polypeptide reads, in one-letter code: Catalase (504 aa).

Catalysis depends on residues His-56 and Asn-129. Residue Tyr-339 coordinates heme.

The protein belongs to the catalase family. As to quaternary structure, homodimer. Heme serves as cofactor.

It carries out the reaction 2 H2O2 = O2 + 2 H2O. Functionally, decomposes hydrogen peroxide into water and oxygen; serves to protect cells from the toxic effects of hydrogen peroxide. The sequence is that of Catalase (katA) from Staphylococcus epidermidis.